The primary structure comprises 21 residues: Cupiennin-6b (21 aa).

The residue at position 21 (S21) is a Serine amide.

Expressed by the venom gland.

Its subcellular location is the secreted. The chain is Cupiennin-6b from Cupiennius salei (American wandering spider).